We begin with the raw amino-acid sequence, 302 residues long: Phospho-N-acetylmuramoyl-pentapeptide-transferase (302 aa).

10 helical membrane passes run 1–21 (MIAANFLLNLFLYPILIKLFR), 42–62 (GTPTMGGILFVLTGFLFGMIS), 67–87 (MVLLGMFLFFLIGFLDDFLSV), 95–115 (LKTYQKALLQTLAAFIMLLLI), 123–143 (FFGSTIEMGKWYYLFALLVIV), 154–174 (GLDGLAGWIYVSGSIPYWFFL), 178–198 (GVSEDILLILGVGVLAFLVFN), 204–224 (IFMGDTGSITLGGVLGTVSVL), 229–249 (FYLVLFFMIPVIETLSVILQV), and 279–299 (IVAVFTVFNLISSLVALEIFG).

Belongs to the glycosyltransferase 4 family. MraY subfamily. It depends on Mg(2+) as a cofactor.

The protein localises to the cell inner membrane. It catalyses the reaction UDP-N-acetyl-alpha-D-muramoyl-L-alanyl-gamma-D-glutamyl-meso-2,6-diaminopimeloyl-D-alanyl-D-alanine + di-trans,octa-cis-undecaprenyl phosphate = di-trans,octa-cis-undecaprenyl diphospho-N-acetyl-alpha-D-muramoyl-L-alanyl-D-glutamyl-meso-2,6-diaminopimeloyl-D-alanyl-D-alanine + UMP. Its pathway is cell wall biogenesis; peptidoglycan biosynthesis. Functionally, catalyzes the initial step of the lipid cycle reactions in the biosynthesis of the cell wall peptidoglycan: transfers peptidoglycan precursor phospho-MurNAc-pentapeptide from UDP-MurNAc-pentapeptide onto the lipid carrier undecaprenyl phosphate, yielding undecaprenyl-pyrophosphoryl-MurNAc-pentapeptide, known as lipid I. In Thermotoga maritima (strain ATCC 43589 / DSM 3109 / JCM 10099 / NBRC 100826 / MSB8), this protein is Phospho-N-acetylmuramoyl-pentapeptide-transferase.